The chain runs to 436 residues: GTPase Der (436 aa).

2 EngA-type G domains span residues 4 to 167 (PTIA…PEQQ) and 176 to 351 (IKFS…ENHR). GTP contacts are provided by residues 10–17 (GRANVGKS), 57–61 (DTGGI), 119–122 (NKID), 182–189 (GRPNVGKS), 229–233 (DTAGM), and 294–297 (NKWD). Residues 352–436 (KRVQSSTLNE…PLHLIARKRN (85 aa)) form the KH-like domain.

This sequence belongs to the TRAFAC class TrmE-Era-EngA-EngB-Septin-like GTPase superfamily. EngA (Der) GTPase family. As to quaternary structure, associates with the 50S ribosomal subunit.

Functionally, GTPase that plays an essential role in the late steps of ribosome biogenesis. In Macrococcus caseolyticus (strain JCSC5402) (Macrococcoides caseolyticum), this protein is GTPase Der.